A 392-amino-acid chain; its full sequence is MLAQSIRDCILWIRKTPDRALRAAKEAADLYQNIQQESRIYQNLRGANDATVILYLDKELSQYERTVKLRLQEFRVSSALLRGFEASQTESAETKKMVEEIEMAISRSQFLRSILSASSVKTHKPLAFEKTGIIPRSIPRTFDRLRRELLASSEDLVVQEFRISRYQTLTSLKFLASLIWIPWIVSWFLRVWWLEPTITMFWNQDQTQLFLHRSQEERALSDMRAFQEKVYFEVLVGEAPDPTPEVLQRRIQAKARDLAEASNQNSIESLANLGSDILACLILLAMLSLEKTKIAVLKSFLDELIYSLNDATKAFFLILVTDVFVGFHSTHGWEVILELLFAHFGFPESKKFIFMFVATFPVLLDTVFKYWIFRYLNHISPSTVAVYHNMNE.

A run of 4 helical transmembrane segments spans residues 174–194 (FLAS…VWWL), 269–289 (SLAN…MLSL), 316–336 (FLIL…WEVI), and 352–372 (FIFM…KYWI).

It belongs to the CemA family.

It is found in the plastid. The protein localises to the chloroplast inner membrane. The enzyme catalyses K(+)(in) + H(+)(out) = K(+)(out) + H(+)(in). In terms of biological role, contributes to K(+)/H(+) antiport activity by supporting proton efflux to control proton extrusion and homeostasis in chloroplasts in a light-dependent manner to modulate photosynthesis. Prevents excessive induction of non-photochemical quenching (NPQ) under continuous-light conditions. Indirectly promotes efficient inorganic carbon uptake into chloroplasts. This is Potassium/proton antiporter CemA from Nephroselmis olivacea (Green alga).